Consider the following 218-residue polypeptide: Small ribosomal subunit protein uS3 (218 aa).

The 69-residue stretch at 38–106 (IREYINKRLQ…RVHINIVEIK (69 aa)) folds into the KH type-2 domain.

This sequence belongs to the universal ribosomal protein uS3 family. As to quaternary structure, part of the 30S ribosomal subunit. Forms a tight complex with proteins S10 and S14.

Functionally, binds the lower part of the 30S subunit head. Binds mRNA in the 70S ribosome, positioning it for translation. This chain is Small ribosomal subunit protein uS3, found in Geobacillus sp. (strain WCH70).